Consider the following 371-residue polypeptide: Aminomethyltransferase (371 aa).

Belongs to the GcvT family. As to quaternary structure, the glycine cleavage system is composed of four proteins: P, T, L and H.

The catalysed reaction is N(6)-[(R)-S(8)-aminomethyldihydrolipoyl]-L-lysyl-[protein] + (6S)-5,6,7,8-tetrahydrofolate = N(6)-[(R)-dihydrolipoyl]-L-lysyl-[protein] + (6R)-5,10-methylene-5,6,7,8-tetrahydrofolate + NH4(+). Its function is as follows. The glycine cleavage system catalyzes the degradation of glycine. In Leptospira borgpetersenii serovar Hardjo-bovis (strain JB197), this protein is Aminomethyltransferase.